The primary structure comprises 290 residues: UPF0761 membrane protein YihY (290 aa).

The next 6 membrane-spanning stretches (helical) occupy residues 44–64 (LLSL…FPMF), 104–124 (VGAC…DSAL), 140–160 (FAVY…SLAI), 183–203 (IFPL…VPTI), 210–230 (AIVG…GFAL), and 244–264 (VLAV…IVLL).

It belongs to the UPF0761 family.

The protein resides in the cell inner membrane. In Escherichia coli O127:H6 (strain E2348/69 / EPEC), this protein is UPF0761 membrane protein YihY.